A 198-amino-acid chain; its full sequence is Potassium-transporting ATPase KdpC subunit (198 aa).

Residues I8 to V28 form a helical membrane-spanning segment.

This sequence belongs to the KdpC family. In terms of assembly, the system is composed of three essential subunits: KdpA, KdpB and KdpC.

The protein localises to the cell membrane. In terms of biological role, part of the high-affinity ATP-driven potassium transport (or Kdp) system, which catalyzes the hydrolysis of ATP coupled with the electrogenic transport of potassium into the cytoplasm. This subunit acts as a catalytic chaperone that increases the ATP-binding affinity of the ATP-hydrolyzing subunit KdpB by the formation of a transient KdpB/KdpC/ATP ternary complex. In Clostridium perfringens (strain ATCC 13124 / DSM 756 / JCM 1290 / NCIMB 6125 / NCTC 8237 / Type A), this protein is Potassium-transporting ATPase KdpC subunit.